Here is a 254-residue protein sequence, read N- to C-terminus: MVIANSNVIFVAGLGGIGLDTSREIVKSGPKNLVVLDRVDNPAAIAELKALNPKVTVTFYPYDVTVPLAETKKLLKTIFDKLKTVDLLINGAGILDDNQIERTIAVNFTGTVNTTTAIMDFWDKRKGGPGGVVANICSVTGFNSIYQVPVYSASKAAALSFTTSIAKLAHITGVTAYSINPGITKTVLVHKFNSWLSVEPRVAELLLEHPTQTTLQCAQNFVKAIEANQNGAIWKLDLGRLDAIEWTKHWDSGI.

An NAD(+)-binding site is contributed by 10–33 (FVAGLGGIGLDTSREIVKSGPKNL). Residue Ser-138 participates in substrate binding. Tyr-151 serves as the catalytic Proton acceptor.

Belongs to the short-chain dehydrogenases/reductases (SDR) family. As to quaternary structure, homodimer.

It catalyses the reaction a primary alcohol + NAD(+) = an aldehyde + NADH + H(+). The enzyme catalyses a secondary alcohol + NAD(+) = a ketone + NADH + H(+). The chain is Alcohol dehydrogenase (Adh) from Drosophila affinidisjuncta (Fruit fly).